The following is a 155-amino-acid chain: MKINVVAVGKRLPAWIKAGFQSYADRLPRDFDLNLIEIAAFKRSKGADLKKIMLQESQQLIDAVPKESEIIVLDRLGEEVDTPTLAQKLSQWRHENRSISLLIGGPEGLSATCIDKARWVWSLSALTLPHALARVIVAEQIYRAWSIITNHPYHR.

Residues Leu73, Gly104, and 123–128 (LSALTL) each bind S-adenosyl-L-methionine.

The protein belongs to the RNA methyltransferase RlmH family. Homodimer.

It is found in the cytoplasm. The enzyme catalyses pseudouridine(1915) in 23S rRNA + S-adenosyl-L-methionine = N(3)-methylpseudouridine(1915) in 23S rRNA + S-adenosyl-L-homocysteine + H(+). Its function is as follows. Specifically methylates the pseudouridine at position 1915 (m3Psi1915) in 23S rRNA. The protein is Ribosomal RNA large subunit methyltransferase H of Coxiella burnetii (strain Dugway 5J108-111).